Reading from the N-terminus, the 562-residue chain is Glutamine--tRNA ligase (562 aa).

The short motif at 35–45 (PEPNGYLHIGH) is the 'HIGH' region element. ATP is bound by residues 36 to 38 (EPN) and 42 to 48 (HIGHAKS). Aspartate 68 and tyrosine 213 together coordinate L-glutamine. ATP-binding positions include threonine 232 and 264 to 265 (RL). The 'KMSKS' region signature appears at 271 to 275 (ITSKR).

The protein belongs to the class-I aminoacyl-tRNA synthetase family. As to quaternary structure, monomer.

The protein localises to the cytoplasm. It carries out the reaction tRNA(Gln) + L-glutamine + ATP = L-glutaminyl-tRNA(Gln) + AMP + diphosphate. This is Glutamine--tRNA ligase from Neisseria meningitidis serogroup A / serotype 4A (strain DSM 15465 / Z2491).